The chain runs to 119 residues: DNA-binding protein TubR (119 aa).

In terms of assembly, homodimer. Binds to TubZ filaments via the C-terminus of TubZ. DNA is not required for binding to TubZ.

Its function is as follows. A DNA-binding protein that is part of the type III plasmid partition system used to ensure correct segregation of the pBc10987 plasmid. Binds TubZ filaments but does not influence the GTPase activity of TubZ with or without DNA. Cooperatively binds to multiple regions in tubC (centromere-like site) upstream of its own gene with consensus sequence N(T/A)ATTNC(C/G)GNAAT(A/T)N; probably forms an extended DNA-protein filament. Binds sites in its own promoter region and presumably represses its expression; its effect on RNA expression has not been shown. Does not specifically bind to the putative origin of replication on pBc10987. In Bacillus cereus (strain ATCC 10987 / NRS 248), this protein is DNA-binding protein TubR.